Reading from the N-terminus, the 853-residue chain is DNA mismatch repair protein MutS (853 aa).

614-621 (GPNMGGKS) serves as a coordination point for ATP.

The protein belongs to the DNA mismatch repair MutS family.

Functionally, this protein is involved in the repair of mismatches in DNA. It is possible that it carries out the mismatch recognition step. This protein has a weak ATPase activity. The sequence is that of DNA mismatch repair protein MutS from Shigella boydii serotype 18 (strain CDC 3083-94 / BS512).